Here is a 292-residue protein sequence, read N- to C-terminus: tRNA pseudouridine synthase B (292 aa).

Asp38 (nucleophile) is an active-site residue.

The protein belongs to the pseudouridine synthase TruB family. Type 1 subfamily.

The catalysed reaction is uridine(55) in tRNA = pseudouridine(55) in tRNA. Responsible for synthesis of pseudouridine from uracil-55 in the psi GC loop of transfer RNAs. The polypeptide is tRNA pseudouridine synthase B (Streptococcus pneumoniae serotype 2 (strain D39 / NCTC 7466)).